A 137-amino-acid polypeptide reads, in one-letter code: Large ribosomal subunit protein uL16 (137 aa).

It belongs to the universal ribosomal protein uL16 family. As to quaternary structure, part of the 50S ribosomal subunit.

In terms of biological role, binds 23S rRNA and is also seen to make contacts with the A and possibly P site tRNAs. This is Large ribosomal subunit protein uL16 from Maricaulis maris (strain MCS10) (Caulobacter maris).